Here is a 395-residue protein sequence, read N- to C-terminus: Putative transcription factor 079L (395 aa).

Belongs to the IIV-6 282R family.

Its function is as follows. Transcription activation. The sequence is that of Putative transcription factor 079L from Aedes vexans (Inland floodwater mosquito).